Reading from the N-terminus, the 366-residue chain is Erythronate-4-phosphate dehydrogenase (366 aa).

Residues Ser-46 and Thr-67 each contribute to the substrate site. The NAD(+) site is built by Asp-147 and Thr-175. The active site involves Arg-208. NAD(+) is bound at residue Asp-228. The active site involves Glu-233. The Proton donor role is filled by His-250. An NAD(+)-binding site is contributed by Gly-253. Tyr-254 lines the substrate pocket.

Belongs to the D-isomer specific 2-hydroxyacid dehydrogenase family. PdxB subfamily. Homodimer.

The protein localises to the cytoplasm. It carries out the reaction 4-phospho-D-erythronate + NAD(+) = (R)-3-hydroxy-2-oxo-4-phosphooxybutanoate + NADH + H(+). The protein operates within cofactor biosynthesis; pyridoxine 5'-phosphate biosynthesis; pyridoxine 5'-phosphate from D-erythrose 4-phosphate: step 2/5. In terms of biological role, catalyzes the oxidation of erythronate-4-phosphate to 3-hydroxy-2-oxo-4-phosphonooxybutanoate. This is Erythronate-4-phosphate dehydrogenase from Coxiella burnetii (strain RSA 331 / Henzerling II).